Reading from the N-terminus, the 489-residue chain is Zeta-carotene desaturase (489 aa).

This sequence belongs to the zeta carotene desaturase family. NAD(+) serves as cofactor. Requires NADP(+) as cofactor. FAD is required as a cofactor.

The enzyme catalyses 9,9'-di-cis-zeta-carotene + 2 a quinone = 7,7',9,9'-tetra-cis-lycopene + 2 a quinol. It functions in the pathway carotenoid biosynthesis; lycopene biosynthesis. Its function is as follows. Catalyzes the conversion of zeta-carotene to lycopene via the intermediary of neurosporene. It carries out two consecutive desaturations (introduction of double bonds) at positions C-7 and C-7'. The chain is Zeta-carotene desaturase (crtQ) from Synechocystis sp. (strain ATCC 27184 / PCC 6803 / Kazusa).